A 354-amino-acid chain; its full sequence is Interferon-inducible protein AIM2 (354 aa).

Positions 1-87 constitute a Pyrin domain; it reads MESEYREMLL…ANALEEKKKE (87 aa). The interval 95 to 124 is disordered; the sequence is NTKKRGTQKVENRSQAENCSAASATRSDND. Residues 109–120 show a composition bias toward polar residues; the sequence is QAENCSAASATR. The region spanning 144–341 is the HIN-200 domain; the sequence is MVAEQEAIRE…SGPCSFFKVI (198 aa).

Belongs to the HIN-200 family. Self-associates; forms homooligomers in response to cytosolic double-stranded DNA (dsDNA) and the dsDNA seems to serve as oligomerization platform. Component of AIM2 inflammasome, which consists of a signal sensor component (AIM2), an adapter (PYCARD/ASC), which recruits an effector pro-inflammatory caspase (CASP1). Interacts (via pyrin domain) with PYCARD/ASC (via pyrin domain); interaction is direct. Component of the AIM2 PANoptosome complex, a multiprotein complex that drives inflammatory cell death (PANoptosis). Interacts with EIF2AK2/PKR. Interacts with MAPRE1. Interacts (via HIN-200 domain) with IFI202 (via HIN-200 domain 2); preventing activation of the AIM2 inflammasome. Interacts with RACK1; promoting association with PP2A phosphatase and dephosphorylation of AKT1. Interacts with TRIM11; promoting AIM2 recruitment to autophagosomes and autophagy-dependent degradation. Post-translationally, degraded via selective autophagy following interaction with TRIM11. Expressed in developing neurons. Highly expressed in regulatory T-cells (Treg).

The protein resides in the cytoplasm. The protein localises to the inflammasome. Its subcellular location is the nucleus. Inactive in absence of double-stranded DNA (dsDNA). Homooligomerizes upon binding to dsDNA, dsDNA serving as an oligomerization platform. AIM2 requires large dsDNA to generate a structural template that couples dsDNA ligand-binding and homooligomerization. Homooligomerization is followed by recruitment of PYCARD/ASC to initiate speck formation (nucleation). AIM2 and PYCARD/ASC homooligomer filaments assemble bidirectionally and the recognition between AIM2 and PYCARD/ASC oligomers occurs in a head-to-tail manner. Clustered PYCARD/ASC nucleates the formation of CASP1 filaments through the interaction of their respective CARD domains, acting as a platform for CASP1 polymerization and activation. Active CASP1 then specifically processes protein precursors, such as gasdermin-D (GSDMD), IL1B and IL18, leading to the release of mature cytokines in the extracellular milieu or pyroptosis, depending on cell type. AIM2 can be activated in response to events that cause genomic DNA (HIV protease inhibitor nelfinavir) or mitochondrial DNA release in the cytoplasm (such as Perfluoroalkyl substance pollutants or cholesterol overload). Activation of the AIM2 inflammasome is inhibited by IFI202. Activation of the AIM2 inflammasome is inhibited by TRIM11, which promotes autophagy-dependent degradation of AIM2. Functionally, sensor component of the AIM2 inflammasome, which mediates inflammasome activation in response to the presence of double-stranded DNA (dsDNA) in the cytosol, leading to subsequent pyroptosis. Inflammasomes are supramolecular complexes that assemble in the cytosol in response to pathogens and other damage-associated signals and play critical roles in innate immunity and inflammation. Acts as a recognition receptor (PRR): specifically recognizes and binds dsDNA in the cytosol, and mediates the formation of the inflammasome polymeric complex composed of AIM2, CASP1 and PYCARD/ASC. Recruitment of pro-caspase-1 (proCASP1) to the AIM2 inflammasome promotes caspase-1 (CASP1) activation, which subsequently cleaves and activates inflammatory cytokines IL1B and IL18 and gasdermin-D (GSDMD), promoting cytokine secretion. In some cells, CASP1 activation mediates cleavage and activation of GSDMD, triggering pyroptosis without promoting cytokine secretion. Detects cytosolic dsDNA of viral and bacterial origin in a non-sequence-specific manner. Involved in the DNA damage response caused by acute ionizing radiation by mediating pyroptosis of intestinal epithelial cells and bone marrow cells in response to double-strand DNA breaks. Mechanistically, AIM2 senses DNA damage in the nucleus to mediate inflammasome assembly and inflammatory cell death. Also acts as a regulator of neurodevelopment via its role in the DNA damage response: acts by promoting neural cell death in response to DNA damage in the developing brain, thereby purging genetically compromised cells of the central nervous system. Pyroptosis mediated by the AIM2 inflammasome in response to DNA damage is dependent on GSDMD without involving IL1B and IL18 cytokine secretion. Also acts as a mediator of pyroptosis, necroptosis and apoptosis (PANoptosis), an integral part of host defense against pathogens, in response to bacterial infection. Can also trigger PYCARD/ASC-dependent, caspase-1-independent cell death that involves caspase-8 (CASP8). In terms of biological role, also acts as a tumor suppressor independently of its role in inflammatory response. Able to suppress overt cell proliferation in enterocytes: restricts stem cell proliferation in the intestinal mucosa in an inflammasome-independent manner, contributing to a decrease in the likelihood of colorectal cancer development. AIM2 suppresses cell proliferation by inhibiting phosphorylation of AKT1 at 'Ser-473', preventing AKT1 activation and AKT-mTOR signaling pathway. Inhibits AKT1 phosphorylation both by inhibiting the activity of PRKDC/DNA-PK kinase and promoting dephosphorylation by PP2A phosphatase. Also acts as a key regulator of regulatory T-cells (Treg) homeostasis by promoting their stability: acts by preventing AKT1 activation. Its role in Treg homeostasis is important to restain autoimmune diseases. The chain is Interferon-inducible protein AIM2 from Mus musculus (Mouse).